Reading from the N-terminus, the 490-residue chain is MARFPRQQLYIHGAYVDASSNQTFESINPANGEVLAEVAEAGAADLERAVESAEQGQRIWAALTGIERARIMRRAVDLLRERNDELALLETLDTGKPLSETRSVDIITGADVLEYYAGLAPAIEGEQIPLRDSSFVYTRREPLGVVAGIGAWNYPIQIALWKAAPALAAGNAMIFKPSEVTPLSALRLAEIFSEAGLPDGVFNVLTGSGAGVGALITEHPRIAKVSFTGGVATGKKVMASAAGSSLKDVTMELGGKSPLIVCEDADLDRAADIAVMANFFSSGQVCTNGTRVFIPAGLKASFEAKLLERVQRVRLGDPQQEATNFGPLVSFAHMDKVLDYIAQGKAAGARILCGGERVTEGEYARGAFVAPTIFSDCSDDMSIVREEIFGPVLSLLEYQGEDEAIRRANDTEYGLAAGVVTPDLARAHRIIHRLEAGICWINTWGESPAQMPVGGYKQSGIGRENGIASLAHYTRVKSVQVELGEFASVF.

K(+)-binding residues include Ser26, Ile27, and Asp93. Gly150 to Trp152 is an NAD(+) binding site. Lys162 functions as the Charge relay system in the catalytic mechanism. Lys176–Glu179 lines the NAD(+) pocket. A K(+)-binding site is contributed by Val180. Gly230–Thr233 lines the NAD(+) pocket. Leu246 serves as a coordination point for K(+). Glu252 (proton acceptor) is an active-site residue. NAD(+) is bound by residues Gly254, Cys286, and Glu387. The Nucleophile role is filled by Cys286. Cys286 is modified (cysteine sulfenic acid (-SOH)). K(+) is bound by residues Lys457 and Gly460. Glu464 serves as the catalytic Charge relay system.

This sequence belongs to the aldehyde dehydrogenase family. In terms of assembly, dimer of dimers. The cofactor is K(+).

It catalyses the reaction betaine aldehyde + NAD(+) + H2O = glycine betaine + NADH + 2 H(+). It participates in amine and polyamine biosynthesis; betaine biosynthesis via choline pathway; betaine from betaine aldehyde: step 1/1. Involved in the biosynthesis of the osmoprotectant glycine betaine. Catalyzes the irreversible oxidation of betaine aldehyde to the corresponding acid. The polypeptide is Betaine aldehyde dehydrogenase (Stutzerimonas stutzeri (strain A1501) (Pseudomonas stutzeri)).